We begin with the raw amino-acid sequence, 148 residues long: MVXWTDXERHVIADVWGKINPDEIGPHALARLLIVYPWTQRYFSSFGNLSNAAAILGNPKVAAHGKVVVGGLDKAVKHLDNVKGTYAKLSELHSEKLHVDPSNFTLLADCLTITLAAKFGPSVFTPEVHEVWQKFLNVAVAALGKQYH.

The Globin domain occupies 3–148; it reads XWTDXERHVI…AVAALGKQYH (146 aa). The heme b site is built by His-64 and His-93.

It belongs to the globin family. In terms of assembly, heterotetramer of two alpha chains and two beta chains. Red blood cells.

Its function is as follows. Involved in oxygen transport from gills to the various peripheral tissues. The protein is Hemoglobin subunit beta (hbb) of Silurus asotus (Amur catfish).